Here is a 376-residue protein sequence, read N- to C-terminus: Phosphoglycerate kinase (376 aa).

(2R)-3-phosphoglycerate is bound by residues V1, D2, F3, N4, R17, S40, H41, G43, R44, L99, R100, H147, and R148. Residue G191 participates in ADP binding. G191 serves as a coordination point for CDP. The AMP site is built by A192 and K193. Residue A192 coordinates ATP. A192 contributes to the Mg(2+) binding site. D196 lines the CDP pocket. A Mg(2+)-binding site is contributed by D196. K197 lines the AMP pocket. K197 provides a ligand contact to ATP. G215 contacts ADP. G215 serves as a coordination point for CDP. AMP is bound by residues G216 and G290. Residues G216 and G290 each coordinate ATP. 2 residues coordinate CDP: G315 and F320. Residue F320 coordinates ADP. AMP is bound at residue E321. ATP contacts are provided by E321, D352, and T353. D352 is a binding site for Mg(2+).

This sequence belongs to the phosphoglycerate kinase family. In terms of assembly, monomer. Requires Mg(2+) as cofactor.

The catalysed reaction is (2R)-3-phosphoglycerate + ATP = (2R)-3-phospho-glyceroyl phosphate + ADP. It functions in the pathway carbohydrate degradation; glycolysis; pyruvate from D-glyceraldehyde 3-phosphate: step 2/5. This is Phosphoglycerate kinase (PGK) from Glaucoma chattoni.